Consider the following 623-residue polypeptide: Chaperone protein DnaK (623 aa).

The residue at position 175 (Thr-175) is a Phosphothreonine; by autocatalysis. The interval 578-623 (ANPEGAPGAGFDPNNMGGANAGNASAGNDKKDDNVVDADFKVEDDK) is disordered. Over residues 591–604 (NNMGGANAGNASAG) the composition is skewed to low complexity. A compositionally biased stretch (basic and acidic residues) spans 605 to 623 (NDKKDDNVVDADFKVEDDK).

It belongs to the heat shock protein 70 family.

Acts as a chaperone. In Clostridium botulinum (strain 657 / Type Ba4), this protein is Chaperone protein DnaK.